The sequence spans 213 residues: Octanoyltransferase (213 aa).

One can recognise a BPL/LPL catalytic domain in the interval Glu-32–Asp-207. Substrate is bound by residues Arg-71 to His-78, Ser-138 to Gly-140, and Gly-151 to Ala-153. Catalysis depends on Cys-169, which acts as the Acyl-thioester intermediate.

Belongs to the LipB family.

It localises to the cytoplasm. It catalyses the reaction octanoyl-[ACP] + L-lysyl-[protein] = N(6)-octanoyl-L-lysyl-[protein] + holo-[ACP] + H(+). The protein operates within protein modification; protein lipoylation via endogenous pathway; protein N(6)-(lipoyl)lysine from octanoyl-[acyl-carrier-protein]: step 1/2. Catalyzes the transfer of endogenously produced octanoic acid from octanoyl-acyl-carrier-protein onto the lipoyl domains of lipoate-dependent enzymes. Lipoyl-ACP can also act as a substrate although octanoyl-ACP is likely to be the physiological substrate. This is Octanoyltransferase from Escherichia coli O17:K52:H18 (strain UMN026 / ExPEC).